A 250-amino-acid polypeptide reads, in one-letter code: Global transcriptional regulator CodY (250 aa).

Residues 1–146 (MTLLEKTRKL…GATVVGLEIL (146 aa)) are GAF domain. Positions 194–213 (ASKIADKVGITRSVIVNALR) form a DNA-binding region, H-T-H motif.

This sequence belongs to the CodY family.

The protein resides in the cytoplasm. Functionally, DNA-binding global transcriptional regulator which is involved in the adaptive response to starvation and acts by directly or indirectly controlling the expression of numerous genes in response to nutrient availability. During rapid exponential growth, CodY is highly active and represses genes whose products allow adaptation to nutrient depletion. This is Global transcriptional regulator CodY from Caldanaerobacter subterraneus subsp. tengcongensis (strain DSM 15242 / JCM 11007 / NBRC 100824 / MB4) (Thermoanaerobacter tengcongensis).